The sequence spans 560 residues: Probable sulfate transporter MT1781 (560 aa).

The next 11 membrane-spanning stretches (helical) occupy residues Val-29–Val-49, Gly-51–Leu-71, Ile-79–Gly-99, Ala-105–Ala-125, Val-138–Ile-158, Trp-184–Ala-204, Ala-207–Asp-227, Ala-256–Ala-276, Leu-333–Phe-353, Ile-355–Phe-375, and Ala-394–Leu-414. One can recognise an STAS domain in the interval Asp-442–Phe-557.

The protein belongs to the SLC26A/SulP transporter (TC 2.A.53) family.

It localises to the cell membrane. This Mycobacterium tuberculosis (strain CDC 1551 / Oshkosh) protein is Probable sulfate transporter MT1781.